The following is a 349-amino-acid chain: Lipoyl synthase (349 aa).

The [4Fe-4S] cluster site is built by Cys55, Cys60, Cys66, Cys81, Cys85, Cys88, and Ser292. The Radical SAM core domain maps to 67–281; that stretch reads WEDREATFLI…SDAAYELGIK (215 aa). Residues 321–349 form a disordered region; that stretch reads LDSTTSQEASTLLERYGASEDTPVTASRR.

Belongs to the radical SAM superfamily. Lipoyl synthase family. Requires [4Fe-4S] cluster as cofactor.

It localises to the cytoplasm. The enzyme catalyses [[Fe-S] cluster scaffold protein carrying a second [4Fe-4S](2+) cluster] + N(6)-octanoyl-L-lysyl-[protein] + 2 oxidized [2Fe-2S]-[ferredoxin] + 2 S-adenosyl-L-methionine + 4 H(+) = [[Fe-S] cluster scaffold protein] + N(6)-[(R)-dihydrolipoyl]-L-lysyl-[protein] + 4 Fe(3+) + 2 hydrogen sulfide + 2 5'-deoxyadenosine + 2 L-methionine + 2 reduced [2Fe-2S]-[ferredoxin]. Its pathway is protein modification; protein lipoylation via endogenous pathway; protein N(6)-(lipoyl)lysine from octanoyl-[acyl-carrier-protein]: step 2/2. Its function is as follows. Catalyzes the radical-mediated insertion of two sulfur atoms into the C-6 and C-8 positions of the octanoyl moiety bound to the lipoyl domains of lipoate-dependent enzymes, thereby converting the octanoylated domains into lipoylated derivatives. The chain is Lipoyl synthase from Corynebacterium jeikeium (strain K411).